A 207-amino-acid polypeptide reads, in one-letter code: MSERLLVLVRHGQSEWNLKNLFTGWKDPDLTEQGVSEAKEAGRKLKAHGLTFDVAFTSELTRAQHTLKLILDELGQPGLPTSRNLALNERDYGDLSGLNKDDARAKWGEEQVHVWRRSYDVPPPGGESLKDTLARALPYYVQEILPGVLRGQRTLVAAHGNSLRALIMVLEKLTPEGILKRELATGVPIIYRLKADSTVESKLDLAG.

Substrate is bound by residues 10 to 17 (RHGQSEWN), 23 to 24 (TG), R62, 89 to 92 (ERDY), K100, 116 to 117 (RR), and 160 to 161 (GN). H11 functions as the Tele-phosphohistidine intermediate in the catalytic mechanism. The Proton donor/acceptor role is filled by E89.

The protein belongs to the phosphoglycerate mutase family. BPG-dependent PGAM subfamily. Homodimer.

It carries out the reaction (2R)-2-phosphoglycerate = (2R)-3-phosphoglycerate. It participates in carbohydrate degradation; glycolysis; pyruvate from D-glyceraldehyde 3-phosphate: step 3/5. Functionally, catalyzes the interconversion of 2-phosphoglycerate and 3-phosphoglycerate. This chain is 2,3-bisphosphoglycerate-dependent phosphoglycerate mutase, found in Bradyrhizobium sp. (strain BTAi1 / ATCC BAA-1182).